The chain runs to 210 residues: 7-carboxy-7-deazaguanine synthase (210 aa).

Substrate contacts are provided by residues 12–14 (LQG) and arginine 27. The region spanning 18-210 (QAGKAAVFCR…VQTHKYLGLP (193 aa)) is the Radical SAM core domain. 3 residues coordinate [4Fe-4S] cluster: cysteine 31, cysteine 46, and cysteine 49. Threonine 51 is a Mg(2+) binding site. Threonine 90 serves as a coordination point for substrate. S-adenosyl-L-methionine is bound by residues glycine 92, 133 to 135 (SPK), and 173 to 176 (QPMD). Proline 210 contacts substrate.

This sequence belongs to the radical SAM superfamily. 7-carboxy-7-deazaguanine synthase family. In terms of assembly, homodimer. [4Fe-4S] cluster is required as a cofactor. It depends on S-adenosyl-L-methionine as a cofactor. Requires Mg(2+) as cofactor.

The catalysed reaction is 6-carboxy-5,6,7,8-tetrahydropterin + H(+) = 7-carboxy-7-deazaguanine + NH4(+). It participates in purine metabolism; 7-cyano-7-deazaguanine biosynthesis. In terms of biological role, catalyzes the complex heterocyclic radical-mediated conversion of 6-carboxy-5,6,7,8-tetrahydropterin (CPH4) to 7-carboxy-7-deazaguanine (CDG), a step common to the biosynthetic pathways of all 7-deazapurine-containing compounds. The polypeptide is 7-carboxy-7-deazaguanine synthase (Caulobacter vibrioides (strain ATCC 19089 / CIP 103742 / CB 15) (Caulobacter crescentus)).